A 218-amino-acid chain; its full sequence is Ropporin-1-like protein (218 aa).

The region spanning 17–54 (PALPNMLKQFTKAAIRTQPRDVLQWAADYFSALSKGQD) is the RIIa domain. The interval 199–218 (QSQGGMVQPSNFTSLHTAEK) is disordered.

The protein belongs to the ropporin family. Component of axonemal radial spoke complexes.

It is found in the cell projection. Its subcellular location is the cilium. It localises to the flagellum. Functions as part of axonemal radial spoke complexes that play an important part in the motility of sperm and cilia. Important for male fertility. Involved in fibrous sheath integrity and sperm motility, plays a role in PKA-dependent signaling processes required for spermatozoa capacitation. This Danio rerio (Zebrafish) protein is Ropporin-1-like protein (ropn1l).